The sequence spans 459 residues: Mitochondrial distribution and morphology protein 10 (459 aa).

Belongs to the MDM10 family. In terms of assembly, component of the ER-mitochondria encounter structure (ERMES) or MDM complex, composed of mmm1, mdm10, mdm12 and mdm34. Associates with the mitochondrial outer membrane sorting assembly machinery SAM(core) complex.

The protein resides in the mitochondrion outer membrane. Its function is as follows. Component of the ERMES/MDM complex, which serves as a molecular tether to connect the endoplasmic reticulum and mitochondria. Components of this complex are involved in the control of mitochondrial shape and protein biogenesis and may function in phospholipid exchange. mdm10 is involved in the late assembly steps of the general translocase of the mitochondrial outer membrane (TOM complex). Functions in the tom40-specific route of the assembly of outer membrane beta-barrel proteins, including the association of tom40 with the receptor tom22 and small TOM proteins. Can associate with the SAM(core) complex as well as the mdm12-mmm1 complex, both involved in late steps of the major beta-barrel assembly pathway, that is responsible for biogenesis of all outer membrane beta-barrel proteins. May act as a switch that shuttles between both complexes and channels precursor proteins into the tom40-specific pathway. Plays a role in mitochondrial morphology and in the inheritance of mitochondria. This is Mitochondrial distribution and morphology protein 10 (mdmB) from Aspergillus terreus (strain NIH 2624 / FGSC A1156).